Here is a 559-residue protein sequence, read N- to C-terminus: DNA ligase (559 aa).

Residue Glu248 participates in ATP binding. Lys250 (N6-AMP-lysine intermediate) is an active-site residue. ATP is bound by residues Arg255, Arg270, Glu300, Phe341, Arg417, and Lys423.

The protein belongs to the ATP-dependent DNA ligase family. Mg(2+) is required as a cofactor.

The catalysed reaction is ATP + (deoxyribonucleotide)n-3'-hydroxyl + 5'-phospho-(deoxyribonucleotide)m = (deoxyribonucleotide)n+m + AMP + diphosphate.. Functionally, DNA ligase that seals nicks in double-stranded DNA during DNA replication, DNA recombination and DNA repair. In Methanopyrus kandleri (strain AV19 / DSM 6324 / JCM 9639 / NBRC 100938), this protein is DNA ligase.